An 88-amino-acid chain; its full sequence is Stannin (88 aa).

Residues 1 to 10 (MSIMDHSPTT) lie on the Mitochondrial intermembrane side of the membrane. The chain crosses the membrane as a helical span at residues 11-31 (GVVTVIVILIAIAALGALILG). Topologically, residues 32 to 88 (CWCYLRLQRISQSEDEESIVGDGETKEPFLLVQYSAKGPCVERKAKLMTPNGPEVHG) are cytoplasmic. Residue S49 is modified to Phosphoserine.

It belongs to the stannin family. In terms of assembly, monomer.

It localises to the mitochondrion outer membrane. Plays a role in the toxic effects of organotins. Plays a role in endosomal maturation. The protein is Stannin (SNN) of Homo sapiens (Human).